We begin with the raw amino-acid sequence, 322 residues long: Large ribosomal subunit protein uL10 (322 aa).

The tract at residues 294–322 is disordered; it reads APAAAAKAEKEEEPAEESDDEMGFGLFDE. Residues 304 to 322 show a composition bias toward acidic residues; sequence EEEPAEESDDEMGFGLFDE.

The protein belongs to the universal ribosomal protein uL10 family. As to quaternary structure, P0 forms a pentameric complex by interaction with dimers of P1 and P2. Phosphorylated.

Ribosomal protein P0 is the functional equivalent of E.coli protein L10. The protein is Large ribosomal subunit protein uL10 of Lupinus luteus (European yellow lupine).